Consider the following 142-residue polypeptide: NTF2-related export protein 2 (142 aa).

Residues 17 to 136 (AAEEFVNIYY…WKIASDCFRF (120 aa)) enclose the NTF2 domain.

Associates with NXF1, NXF2, NXF3 and NXF5.

It localises to the nucleus. Its subcellular location is the cytoplasm. Functionally, regulator of protein export for NES-containing proteins. Also plays a role in mRNA nuclear export. In Bos taurus (Bovine), this protein is NTF2-related export protein 2 (NXT2).